A 115-amino-acid polypeptide reads, in one-letter code: Fluoride-specific ion channel FluC 4 (115 aa).

A run of 2 helical transmembrane segments spans residues 19–39 (WGTF…AGLG) and 42–62 (LGGI…LLGG). 2 residues coordinate Na(+): G61 and T64. A helical transmembrane segment spans residues 89–109 (IVASALLCVLAVAAGYGGIMW).

It belongs to the fluoride channel Fluc/FEX (TC 1.A.43) family.

Its subcellular location is the cell inner membrane. The enzyme catalyses fluoride(in) = fluoride(out). Its activity is regulated as follows. Na(+) is not transported, but it plays an essential structural role and its presence is essential for fluoride channel function. Functionally, fluoride-specific ion channel. Important for reducing fluoride concentration in the cell, thus reducing its toxicity. The polypeptide is Fluoride-specific ion channel FluC 4 (Brucella melitensis biotype 1 (strain ATCC 23456 / CCUG 17765 / NCTC 10094 / 16M)).